A 617-amino-acid chain; its full sequence is Dihydroxy-acid dehydratase (617 aa).

Aspartate 81 serves as a coordination point for Mg(2+). Cysteine 122 is a [2Fe-2S] cluster binding site. Mg(2+) contacts are provided by aspartate 123 and lysine 124. Lysine 124 carries the N6-carboxylysine modification. Cysteine 195 is a [2Fe-2S] cluster binding site. Glutamate 491 is a binding site for Mg(2+). Serine 517 acts as the Proton acceptor in catalysis.

Belongs to the IlvD/Edd family. Homodimer. Requires [2Fe-2S] cluster as cofactor. Mg(2+) is required as a cofactor.

The catalysed reaction is (2R)-2,3-dihydroxy-3-methylbutanoate = 3-methyl-2-oxobutanoate + H2O. The enzyme catalyses (2R,3R)-2,3-dihydroxy-3-methylpentanoate = (S)-3-methyl-2-oxopentanoate + H2O. Its pathway is amino-acid biosynthesis; L-isoleucine biosynthesis; L-isoleucine from 2-oxobutanoate: step 3/4. The protein operates within amino-acid biosynthesis; L-valine biosynthesis; L-valine from pyruvate: step 3/4. In terms of biological role, functions in the biosynthesis of branched-chain amino acids. Catalyzes the dehydration of (2R,3R)-2,3-dihydroxy-3-methylpentanoate (2,3-dihydroxy-3-methylvalerate) into 2-oxo-3-methylpentanoate (2-oxo-3-methylvalerate) and of (2R)-2,3-dihydroxy-3-methylbutanoate (2,3-dihydroxyisovalerate) into 2-oxo-3-methylbutanoate (2-oxoisovalerate), the penultimate precursor to L-isoleucine and L-valine, respectively. The polypeptide is Dihydroxy-acid dehydratase (Caulobacter vibrioides (strain ATCC 19089 / CIP 103742 / CB 15) (Caulobacter crescentus)).